Reading from the N-terminus, the 699-residue chain is Endogenous retrovirus group K member 113 Env polyprotein (699 aa).

A disordered region spans residues 1–47 (MNPSEMQRKAPPRRRRHRNRAPLTHKMNKMVTSEEQMKLPSTKKAEP). Positions 1-89 (MNPSEMQRKA…ALMIVSMVVS (89 aa)) are cleaved as a signal peptide. A compositionally biased stretch (basic residues) spans 10 to 20 (APPRRRRHRNR). The Extracellular segment spans residues 90–632 (LPMPAGAAAA…NLNPVTWVKT (543 aa)). N-linked (GlcNAc...) asparagine glycosylation is found at N100, N128, N153, N274, N355, N372, and N461. The fusion peptide stretch occupies residues 466–486 (FIFTLIAVIMGLIAVTATAAV). 4 N-linked (GlcNAc...) asparagine glycosylation sites follow: N507, N554, N566, and N585. A helical transmembrane segment spans residues 633–653 (IGSTTIINLILILVCLFCLLL). Over 654–699 (VCRCTQQLRRDSDHRERAMMTMAVLSKRKGGNVGKSKRDQIVTVSV) the chain is Cytoplasmic.

The protein belongs to the beta type-B retroviral envelope protein family. HERV class-II K(HML-2) env subfamily. In terms of assembly, the surface (SU) and transmembrane (TM) proteins form a heterodimer. SU and TM are attached by noncovalent interactions or by a labile interchain disulfide bond. Post-translationally, specific enzymatic cleavages in vivo yield the mature SU and TM proteins.

The protein localises to the cell membrane. Its subcellular location is the virion. Retroviral envelope proteins mediate receptor recognition and membrane fusion during early infection. Endogenous envelope proteins may have kept, lost or modified their original function during evolution. This endogenous envelope protein has lost its original fusogenic properties. Its function is as follows. SU mediates receptor recognition. Functionally, TM anchors the envelope heterodimer to the viral membrane through one transmembrane domain. The other hydrophobic domain, called fusion peptide, mediates fusion of the viral membrane with the target cell membrane. The polypeptide is Endogenous retrovirus group K member 113 Env polyprotein (HERVK_113) (Homo sapiens (Human)).